Reading from the N-terminus, the 122-residue chain is Large ribosomal subunit protein uL14 (122 aa).

The protein belongs to the universal ribosomal protein uL14 family. In terms of assembly, part of the 50S ribosomal subunit. Forms a cluster with proteins L3 and L19. In the 70S ribosome, L14 and L19 interact and together make contacts with the 16S rRNA in bridges B5 and B8.

Its function is as follows. Binds to 23S rRNA. Forms part of two intersubunit bridges in the 70S ribosome. This chain is Large ribosomal subunit protein uL14, found in Campylobacter concisus (strain 13826).